We begin with the raw amino-acid sequence, 473 residues long: 3-isopropylmalate dehydratase large subunit (473 aa).

Cys-351, Cys-414, and Cys-417 together coordinate [4Fe-4S] cluster.

It belongs to the aconitase/IPM isomerase family. LeuC type 1 subfamily. Heterodimer of LeuC and LeuD. The cofactor is [4Fe-4S] cluster.

The enzyme catalyses (2R,3S)-3-isopropylmalate = (2S)-2-isopropylmalate. It functions in the pathway amino-acid biosynthesis; L-leucine biosynthesis; L-leucine from 3-methyl-2-oxobutanoate: step 2/4. In terms of biological role, catalyzes the isomerization between 2-isopropylmalate and 3-isopropylmalate, via the formation of 2-isopropylmaleate. The polypeptide is 3-isopropylmalate dehydratase large subunit (Variovorax paradoxus (strain S110)).